Here is a 145-residue protein sequence, read N- to C-terminus: Large ribosomal subunit protein uL13 (145 aa).

The protein belongs to the universal ribosomal protein uL13 family. As to quaternary structure, part of the 50S ribosomal subunit.

Functionally, this protein is one of the early assembly proteins of the 50S ribosomal subunit, although it is not seen to bind rRNA by itself. It is important during the early stages of 50S assembly. This Geobacillus sp. (strain WCH70) protein is Large ribosomal subunit protein uL13.